A 109-amino-acid chain; its full sequence is Phosphoribosyl-AMP cyclohydrolase (109 aa).

A Mg(2+)-binding site is contributed by Asp-80. Residue Cys-81 coordinates Zn(2+). 2 residues coordinate Mg(2+): Asp-82 and Asp-84. Zn(2+)-binding residues include Cys-97 and Cys-104.

This sequence belongs to the PRA-CH family. As to quaternary structure, homodimer. Mg(2+) is required as a cofactor. Requires Zn(2+) as cofactor.

Its subcellular location is the cytoplasm. The catalysed reaction is 1-(5-phospho-beta-D-ribosyl)-5'-AMP + H2O = 1-(5-phospho-beta-D-ribosyl)-5-[(5-phospho-beta-D-ribosylamino)methylideneamino]imidazole-4-carboxamide. Its pathway is amino-acid biosynthesis; L-histidine biosynthesis; L-histidine from 5-phospho-alpha-D-ribose 1-diphosphate: step 3/9. Functionally, catalyzes the hydrolysis of the adenine ring of phosphoribosyl-AMP. The polypeptide is Phosphoribosyl-AMP cyclohydrolase (Clostridium beijerinckii (strain ATCC 51743 / NCIMB 8052) (Clostridium acetobutylicum)).